Reading from the N-terminus, the 820-residue chain is Phenylalanine--tRNA ligase beta subunit (820 aa).

A tRNA-binding domain is found at 39–150 (PAPVGGVLLV…GTAAPGTPLR (112 aa)). Residues 435–510 (EVPQTITTTG…RLHGFTELPE (76 aa)) form the B5 domain. Mg(2+) contacts are provided by D488, D494, E497, and E498. Positions 727 to 818 (SRAPAAWRDL…AVKARGWAIR (92 aa)) constitute an FDX-ACB domain.

The protein belongs to the phenylalanyl-tRNA synthetase beta subunit family. Type 1 subfamily. As to quaternary structure, tetramer of two alpha and two beta subunits. Requires Mg(2+) as cofactor.

It is found in the cytoplasm. It catalyses the reaction tRNA(Phe) + L-phenylalanine + ATP = L-phenylalanyl-tRNA(Phe) + AMP + diphosphate + H(+). In Deinococcus radiodurans (strain ATCC 13939 / DSM 20539 / JCM 16871 / CCUG 27074 / LMG 4051 / NBRC 15346 / NCIMB 9279 / VKM B-1422 / R1), this protein is Phenylalanine--tRNA ligase beta subunit (pheT).